We begin with the raw amino-acid sequence, 335 residues long: Holliday junction branch migration complex subunit RuvB (335 aa).

The segment at 1–183 is large ATPase domain (RuvB-L); the sequence is MDERIISSET…FGVIDHLEFY (183 aa). Residues L22, R23, G64, K67, T68, T69, 130 to 132, R173, Y183, and R220 contribute to the ATP site; that span reads EDY. Position 68 (T68) interacts with Mg(2+). The segment at 184-254 is small ATPAse domain (RuvB-S); the sequence is TEEQLTEIVL…LAKEALTLLQ (71 aa). A head domain (RuvB-H) region spans residues 257-335; it reads PRGLDTIDQK…HLGISYEKEV (79 aa). Residues R293, R312, and R317 each coordinate DNA.

The protein belongs to the RuvB family. Homohexamer. Forms an RuvA(8)-RuvB(12)-Holliday junction (HJ) complex. HJ DNA is sandwiched between 2 RuvA tetramers; dsDNA enters through RuvA and exits via RuvB. An RuvB hexamer assembles on each DNA strand where it exits the tetramer. Each RuvB hexamer is contacted by two RuvA subunits (via domain III) on 2 adjacent RuvB subunits; this complex drives branch migration. In the full resolvosome a probable DNA-RuvA(4)-RuvB(12)-RuvC(2) complex forms which resolves the HJ.

The protein resides in the cytoplasm. It catalyses the reaction ATP + H2O = ADP + phosphate + H(+). In terms of biological role, the RuvA-RuvB-RuvC complex processes Holliday junction (HJ) DNA during genetic recombination and DNA repair, while the RuvA-RuvB complex plays an important role in the rescue of blocked DNA replication forks via replication fork reversal (RFR). RuvA specifically binds to HJ cruciform DNA, conferring on it an open structure. The RuvB hexamer acts as an ATP-dependent pump, pulling dsDNA into and through the RuvAB complex. RuvB forms 2 homohexamers on either side of HJ DNA bound by 1 or 2 RuvA tetramers; 4 subunits per hexamer contact DNA at a time. Coordinated motions by a converter formed by DNA-disengaged RuvB subunits stimulates ATP hydrolysis and nucleotide exchange. Immobilization of the converter enables RuvB to convert the ATP-contained energy into a lever motion, pulling 2 nucleotides of DNA out of the RuvA tetramer per ATP hydrolyzed, thus driving DNA branch migration. The RuvB motors rotate together with the DNA substrate, which together with the progressing nucleotide cycle form the mechanistic basis for DNA recombination by continuous HJ branch migration. Branch migration allows RuvC to scan DNA until it finds its consensus sequence, where it cleaves and resolves cruciform DNA. This Listeria monocytogenes serotype 4b (strain CLIP80459) protein is Holliday junction branch migration complex subunit RuvB.